The sequence spans 284 residues: uncharacterized protein (284 aa).

Residues 1 to 8 are Cytoplasmic-facing; that stretch reads MLWKVSKM. Residues 9–25 form a helical membrane-spanning segment; it reads FLGGLVALTTISVATLY. The Extracellular segment spans residues 26-80; sequence HYQNRLVYPSWAQGARNHVDTPDSRGIPYEKLTLITQDHIKLEAWDIKNENSTST. The helical transmembrane segment at 81–101 threads the bilayer; sequence VLILCPNAGNIGYFILIIDIF. At 102–284 the chain is on the cytoplasmic side; it reads YRQFGMSVFI…RDFLIEKGFI (183 aa).

It to S.pombe bem46 and M.tuberculosis Rv2307c.

It localises to the mitochondrion membrane. This is an uncharacterized protein from Saccharomyces cerevisiae (strain ATCC 204508 / S288c) (Baker's yeast).